The primary structure comprises 35 residues: Delta-theraphotoxin-Hm1a (35 aa).

3 disulfide bridges follow: C2/C16, C9/C21, and C15/C28.

This sequence belongs to the neurotoxin 10 (Hwtx-1) family. 09 (HaTx) subfamily. As to expression, expressed by the venom gland.

Its subcellular location is the secreted. Its function is as follows. Gating-modifier toxin that potently inhibits inactivation of the mammalian Nav1.1/SCN1A sodium channel (EC(50)=38 nM). Also moderately inhibits inactivation of Nav1.2/SCN2A (EC(50)=236 nM) and Nav1.3/SCN3A (EC(50)=220 nM) when the channels are expressed in oocytes without the beta-1 auxiliary subunit. Does not inhibit inactivation of Nav1.2/SCN2A when the channel is coexpressed with the beta-1 auxiliary subunit. When tested on Nav1.1/SCN1A channel, it enhances peak current amplitude and potently delays channel inactivation in a dose-dependent manner, leading to a large sustained current. It has no effect on the voltage-dependence of steady-state activation, and induces a depolarizing shift in the voltage dependence of inactivation. In addition, it does not modify the recovery from fast inactivation in Nav1.1/SCN1A. The binding affinity and subtype selectivity of the toxin towards Nav1.1/SCN1A channel is determined by residues within both the S1-S2 and S3-S4 loops of the domain IV voltage sensor of the channel. This toxin also weakly inhibits several subtypes of voltage-gated potassium channels. It moderately blocks Kv2.1/KCNB1 (23% inhibition at 100 nM), Kv2.2/KCNB2 (19.7% at 100 nM and 51% at 300 nM), Kv4.1/KCND1 (IC(50)=280 nM), Kv4.2/KCND2 (39% at 300 nM) and Kv4.3/KCND3 (43% at 300 nM). In vivo, intracerebroventricular injection into mice elicits convulsions, spasms, tremors and rapid death. When injected into mouse hindpaw, the toxin elicits an immediate and robust response to pain. However, intraplantar injection of toxin does not cause neurogenic inflammation or alter sensitivity to heat, indicative of a modality-specific effect on mechanosensitive neurons. In Dravet syndrome mice model, intracerebroventricular infusion of this peptide rescues mice from seizures and premature death. The polypeptide is Delta-theraphotoxin-Hm1a (Heteroscodra maculata (Togo starburst tarantula)).